Consider the following 381-residue polypeptide: tRNA pseudouridine synthase D (381 aa).

Asp81 serves as the catalytic Nucleophile. Positions 160–335 (GMPNYFGSQR…TLGSRRFFWV (176 aa)) constitute a TRUD domain.

The protein belongs to the pseudouridine synthase TruD family.

The catalysed reaction is uridine(13) in tRNA = pseudouridine(13) in tRNA. Functionally, responsible for synthesis of pseudouridine from uracil-13 in transfer RNAs. In Helicobacter pylori (strain G27), this protein is tRNA pseudouridine synthase D.